Reading from the N-terminus, the 208-residue chain is Small ribosomal subunit protein uS4 (208 aa).

Residues 98-160 (QRLDNVVYRM…SKNNSQIVRA (63 aa)) enclose the S4 RNA-binding domain.

It belongs to the universal ribosomal protein uS4 family. In terms of assembly, part of the 30S ribosomal subunit. Contacts protein S5. The interaction surface between S4 and S5 is involved in control of translational fidelity.

Its function is as follows. One of the primary rRNA binding proteins, it binds directly to 16S rRNA where it nucleates assembly of the body of the 30S subunit. Functionally, with S5 and S12 plays an important role in translational accuracy. The protein is Small ribosomal subunit protein uS4 of Sulfurimonas denitrificans (strain ATCC 33889 / DSM 1251) (Thiomicrospira denitrificans (strain ATCC 33889 / DSM 1251)).